Here is a 1043-residue protein sequence, read N- to C-terminus: Sarcoplasmic/endoplasmic reticulum calcium ATPase 2 (1043 aa).

Residues 1-48 (MENAHTKTVEEVLGHFGVNESTGLSLEQVKKLKERWGSNELPAEEGKT) are Cytoplasmic-facing. Phosphoserine is present on Ser38. Residues 49–69 (LLELVIEQFEDLLVRILLLAA) traverse the membrane as a helical segment. Residues 70-89 (CISFVLAWFEEGEETITAFV) are Lumenal-facing. The chain crosses the membrane as a helical span at residues 90-110 (EPFVILLILVANAIVGVWQER). Residues 111–253 (NAENAIEALK…QERTPLQQKL (143 aa)) are Cytoplasmic-facing. Residues 254-273 (DEFGEQLSKVISLICIAVWI) form a helical membrane-spanning segment. Residues 274 to 295 (INIGHFNDPVHGGSWIRGAIYY) are Lumenal-facing. Residues Tyr294 and Tyr295 each carry the 3'-nitrotyrosine modification. A helical transmembrane segment spans residues 296–313 (FKIAVALAVAAIPEGLPA). Residues Val304, Ala305, Ile307, and Glu309 each coordinate Ca(2+). Over 314 to 756 (VITTCLALGT…EEGRAIYNNM (443 aa)) the chain is Cytoplasmic. Asp351 functions as the 4-aspartylphosphate intermediate in the catalytic mechanism. Asp351 and Thr353 together coordinate Mg(2+). Thr353 contributes to the ATP binding site. At Thr441 the chain carries Phosphothreonine. The ATP site is built by Glu442, Arg489, and Lys514. The residue at position 531 (Ser531) is a Phosphoserine. Residue Arg559 participates in ATP binding. Residues 575 to 594 (MHLEDSANFIKYETNLTFVG) form an interaction with HAX1 region. Position 580 is a phosphoserine (Ser580). 3 residues coordinate ATP: Thr624, Gly625, and Asp626. Ser661 and Ser663 each carry phosphoserine. Residues Arg677 and Lys683 each coordinate ATP. Asp702 serves as a coordination point for Mg(2+). Asn705 contacts ATP. The chain crosses the membrane as a helical span at residues 757-776 (KQFIRYLISSNVGEVVCIFL). 2 residues coordinate Ca(2+): Asn767 and Glu770. Residues 777–786 (TAALGFPEAL) lie on the Lumenal side of the membrane. The chain crosses the membrane as a helical span at residues 787 to 807 (IPVQLLWVNLVTDGLPATALG). Residues 787–807 (IPVQLLWVNLVTDGLPATALG) are interaction with PLN. The segment at 788–1043 (PVQLLWVNLV…DTNFSDMFWS (256 aa)) is interaction with TMEM64 and PDIA3. Ca(2+)-binding residues include Asn795, Thr798, and Asp799. Over 808-827 (FNPPDLDIMNKPPRNPKEPL) the chain is Cytoplasmic. A helical transmembrane segment spans residues 828–850 (ISGWLFFRYLAIGCYVGAATVGA). The Lumenal segment spans residues 851 to 896 (AAWWFIAADGGPRVSFYQLSHFLQCKEDNPDFEGVDCAIFESPYPM). An intrachain disulfide couples Cys875 to Cys887. Residues 897–916 (TMALSVLVTIEMCNALNSLS) form a helical membrane-spanning segment. Ca(2+) is bound at residue Glu907. Residues 917 to 929 (ENQSLLRMPPWEN) are Cytoplasmic-facing. A helical membrane pass occupies residues 930–948 (IWLVGSICLSMSLHFLILY). Residues 931–942 (WLVGSICLSMSL) form an interaction with PLN region. The Lumenal portion of the chain corresponds to 949-963 (VEPLPLIFQITPLNL). The helical transmembrane segment at 964-984 (TQWLMVLKISLPVILMDETLK) threads the bilayer. The Cytoplasmic segment spans residues 985-1043 (FVARNYLEPGKECAQPATKPSCSLSACTDGISWPFVLLIMPLVVWVYSTDTNFSDMFWS).

This sequence belongs to the cation transport ATPase (P-type) (TC 3.A.3) family. Type IIA subfamily. As to quaternary structure, interacts with sarcolipin (SLN); the interaction inhibits ATP2A2 Ca(2+) affinity. Interacts with phospholamban (PLN); the interaction inhibits ATP2A2 Ca(2+) affinity. Interacts with myoregulin (MRLN). Interacts with ARLN and ERLN; the interactions inhibit ATP2A2 Ca(2+) affinity. Interacts with STRIT1/DWORF; the interaction results in activation of ATP2A2. Interacts with the monomeric forms of SLN, PLN, ARLN, ERLN and STRI1/DWORF. Interacts with HAX1. Interacts with S100A8 and S100A9. Interacts with SLC35G1 and STIM1. Interacts with TMEM203. Interacts with TMEM64 and PDIA3. Interacts with TMX1. Interacts with TMX2. Interacts with VMP1; VMP1 competes with PLN and SLN to prevent them from forming an inhibitory complex with ATP2A2. Interacts with ULK1. Interacts with S100A1 in a Ca(2+)-dependent manner. Interacts with TUNAR. Interacts with FLVCR2; this interaction occurs in the absence of heme and promotes ATP2A2 proteasomal degradation; this complex is dissociated upon heme binding. Interacts with FNIP1. In terms of assembly, interacts with TRAM2 (via C-terminus). Mg(2+) is required as a cofactor. Post-translationally, nitrated under oxidative stress. Nitration on the two tyrosine residues inhibits catalytic activity. In terms of processing, serotonylated on Gln residues by TGM2 in response to hypoxia, leading to its inactivation. In terms of tissue distribution, isoform 2 is highly expressed in heart and slow twitch skeletal muscle. Isoform 1 is widely expressed.

It is found in the endoplasmic reticulum membrane. The protein localises to the sarcoplasmic reticulum membrane. The catalysed reaction is Ca(2+)(in) + ATP + H2O = Ca(2+)(out) + ADP + phosphate + H(+). Has different conformational states with differential Ca2+ affinity. The E1 conformational state (active form) shows high Ca(2+) affinity, while the E2 state exhibits low Ca(2+) affinity. Binding of ATP allosterically increases its affinity for subsequent binding of Ca2+. Reversibly inhibited by phospholamban (PLN) at low calcium concentrations. PLN inhibits ATP2A2 Ca(2+) affinity by disrupting its allosteric activation by ATP. Inhibited by sarcolipin (SLN) and myoregulin (MRLN). The inhibition is blocked by VMP1. Enhanced by STRIT1/DWORF; STRIT1 increases activity by displacing sarcolipin (SLN), phospholamban (PLN) and myoregulin (MRLN). Stabilizes SERCA2 in its E2 state. Its function is as follows. This magnesium-dependent enzyme catalyzes the hydrolysis of ATP coupled with the translocation of calcium from the cytosol to the sarcoplasmic reticulum lumen. Involved in autophagy in response to starvation. Upon interaction with VMP1 and activation, controls ER-isolation membrane contacts for autophagosome formation. Also modulates ER contacts with lipid droplets, mitochondria and endosomes. In coordination with FLVCR2 mediates heme-stimulated switching from mitochondrial ATP synthesis to thermogenesis. Functionally, involved in the regulation of the contraction/relaxation cycle. Acts as a regulator of TNFSF11-mediated Ca(2+) signaling pathways via its interaction with TMEM64 which is critical for the TNFSF11-induced CREB1 activation and mitochondrial ROS generation necessary for proper osteoclast generation. Association between TMEM64 and SERCA2 in the ER leads to cytosolic Ca(2+) spiking for activation of NFATC1 and production of mitochondrial ROS, thereby triggering Ca(2+) signaling cascades that promote osteoclast differentiation and activation. This chain is Sarcoplasmic/endoplasmic reticulum calcium ATPase 2 (Atp2a2), found in Rattus norvegicus (Rat).